A 549-amino-acid polypeptide reads, in one-letter code: Zinc finger protein 266 (549 aa).

In terms of domain architecture, KRAB spans 1-42; it reads MLENYKNLATVGYQLFKPSLISWLEQEESRTVQRGDFQASEW. A C2H2-type 1; degenerate zinc finger spans residues 156–178; the sequence is FDCSDSGKSFINHSHLQGHLRTH. A C2H2-type 2; degenerate zinc finger spans residues 184-206; the sequence is HEWKECGRGFIHSTDLAVRIQTH. C2H2-type zinc fingers lie at residues 212-234, 240-262, 268-290, 296-318, 324-346, 352-374, 380-402, 408-430, 436-458, 464-486, 492-514, and 520-542; these read YKCK…MGTH, YECK…RKTH, YKCK…MKIH, YECK…LKTH, FECK…FRIH, YKCK…ARTH, YECK…TRTH, FECV…LRIH, FECL…MRTH, FTCM…MRIH, YKCK…ERTH, and YECK…ERRH. Residues 530–549 are disordered; the sequence is SSSSSFRNHERRHADERLSA.

Belongs to the krueppel C2H2-type zinc-finger protein family.

It is found in the nucleus. Its function is as follows. May be involved in transcriptional regulation. The sequence is that of Zinc finger protein 266 (ZNF266) from Homo sapiens (Human).